Consider the following 379-residue polypeptide: MDTLLPAFIDAEEQEQAQEIRTFLKEQGADLKEESITPLQDELAEILECCQVCFKEDAELESVMNSILSLVLVVPEKRNELIKKCCDKLKANMSEDENSSAAARLRVLSVLFSGLPEKDPMRHEVYCTQLTIAAKASLVDDIPTELELVKGWLGLWDVDADQRRQVFRLLHGALHDEKRSEEASKVMIELLSTYTDENASAAREDAKSCVVSCLTKPNVLIMDNILSLKPVAVLQGDPIYQLLQIFVSGDVQDYKKFYDSNTDFINSIGLSHEMNLKKMRVLTLMSIGKETDEISYEDLATKLGISSDEIEQFLIEAIQTGLVKARLDQVHRKVIISSVAQRTFGINQWQNLHSRLVKWRDNLLSVRGGLQSVVPPITV.

Positions 179–341 (RSEEASKVMI…RKVIISSVAQ (163 aa)) constitute a PCI domain.

The protein belongs to the eIF-3 subunit M family. As to quaternary structure, component of the eukaryotic translation initiation factor 3 (eIF-3) complex.

The protein localises to the cytoplasm. Its function is as follows. Component of the eukaryotic translation initiation factor 3 (eIF-3) complex, which is involved in protein synthesis of a specialized repertoire of mRNAs and, together with other initiation factors, stimulates binding of mRNA and methionyl-tRNAi to the 40S ribosome. The eIF-3 complex specifically targets and initiates translation of a subset of mRNAs involved in cell proliferation. In Nematostella vectensis (Starlet sea anemone), this protein is Eukaryotic translation initiation factor 3 subunit M.